The primary structure comprises 146 residues: MKSYYFESNEPVSVQQLNNINVLYYPMPMPDYQEKLDQICQERGYKNRDEVKLNENTENLDAKLKIFFEEHLHDDEEIRFILEGSGFFDVRDANDQWIRIRVEKGDLIIVPANMYHRFTLTETKQIHACRLFTDAPKWVPINRHQQ.

Fe(2+) contacts are provided by H71, H73, E77, and H116. The Ni(2+) site is built by H71, H73, E77, and H116.

It belongs to the acireductone dioxygenase (ARD) family. The cofactor is Fe(2+). Ni(2+) serves as cofactor.

The protein resides in the cytoplasm. It is found in the nucleus. The catalysed reaction is 1,2-dihydroxy-5-(methylsulfanyl)pent-1-en-3-one + O2 = 4-methylsulfanyl-2-oxobutanoate + formate + 2 H(+). The enzyme catalyses 1,2-dihydroxy-5-(methylsulfanyl)pent-1-en-3-one + O2 = 3-(methylsulfanyl)propanoate + CO + formate + 2 H(+). It participates in amino-acid biosynthesis; L-methionine biosynthesis via salvage pathway; L-methionine from S-methyl-5-thio-alpha-D-ribose 1-phosphate: step 5/6. In terms of biological role, catalyzes 2 different reactions between oxygen and the acireductone 1,2-dihydroxy-3-keto-5-methylthiopentene (DHK-MTPene) depending upon the metal bound in the active site. Fe-containing acireductone dioxygenase (Fe-ARD) produces formate and 2-keto-4-methylthiobutyrate (KMTB), the alpha-ketoacid precursor of methionine in the methionine recycle pathway. Ni-containing acireductone dioxygenase (Ni-ARD) produces methylthiopropionate, carbon monoxide and formate, and does not lie on the methionine recycle pathway. In Heterostelium pallidum (strain ATCC 26659 / Pp 5 / PN500) (Cellular slime mold), this protein is Acireductone dioxygenase.